We begin with the raw amino-acid sequence, 301 residues long: tRNA dimethylallyltransferase (301 aa).

10–17 (GATATGKT) contacts ATP. Residue 12 to 17 (TATGKT) participates in substrate binding. The interval 35–38 (DSRQ) is interaction with substrate tRNA.

Belongs to the IPP transferase family. As to quaternary structure, monomer. Mg(2+) serves as cofactor.

The enzyme catalyses adenosine(37) in tRNA + dimethylallyl diphosphate = N(6)-dimethylallyladenosine(37) in tRNA + diphosphate. Functionally, catalyzes the transfer of a dimethylallyl group onto the adenine at position 37 in tRNAs that read codons beginning with uridine, leading to the formation of N6-(dimethylallyl)adenosine (i(6)A). The polypeptide is tRNA dimethylallyltransferase (Crocosphaera subtropica (strain ATCC 51142 / BH68) (Cyanothece sp. (strain ATCC 51142))).